Reading from the N-terminus, the 366-residue chain is Histidinol-phosphate aminotransferase (366 aa).

The residue at position 226 (K226) is an N6-(pyridoxal phosphate)lysine.

It belongs to the class-II pyridoxal-phosphate-dependent aminotransferase family. Histidinol-phosphate aminotransferase subfamily. The cofactor is pyridoxal 5'-phosphate.

The catalysed reaction is L-histidinol phosphate + 2-oxoglutarate = 3-(imidazol-4-yl)-2-oxopropyl phosphate + L-glutamate. The protein operates within amino-acid biosynthesis; L-histidine biosynthesis; L-histidine from 5-phospho-alpha-D-ribose 1-diphosphate: step 7/9. This Methanosarcina barkeri (strain Fusaro / DSM 804) protein is Histidinol-phosphate aminotransferase.